The sequence spans 662 residues: UvrABC system protein B (662 aa).

The Helicase ATP-binding domain maps to 25–411; that stretch reads DGIIAGDKFQ…STRIVEQVIR (387 aa). 38-45 contacts ATP; it reads GVTGSGKT. The Beta-hairpin signature appears at 91–114; that stretch reads YYDYYQPEAYVPARDLYIEKDASI. The Helicase C-terminal domain maps to 428–594; sequence QMEHIYGEVK…TIKKAIEDIL (167 aa). The UVR domain occupies 625 to 660; that stretch reads KKLIKKLEAQMAEYADMLMFEEAAVIRDKIEEVKRI.

This sequence belongs to the UvrB family. In terms of assembly, forms a heterotetramer with UvrA during the search for lesions. Interacts with UvrC in an incision complex.

The protein resides in the cytoplasm. In terms of biological role, the UvrABC repair system catalyzes the recognition and processing of DNA lesions. A damage recognition complex composed of 2 UvrA and 2 UvrB subunits scans DNA for abnormalities. Upon binding of the UvrA(2)B(2) complex to a putative damaged site, the DNA wraps around one UvrB monomer. DNA wrap is dependent on ATP binding by UvrB and probably causes local melting of the DNA helix, facilitating insertion of UvrB beta-hairpin between the DNA strands. Then UvrB probes one DNA strand for the presence of a lesion. If a lesion is found the UvrA subunits dissociate and the UvrB-DNA preincision complex is formed. This complex is subsequently bound by UvrC and the second UvrB is released. If no lesion is found, the DNA wraps around the other UvrB subunit that will check the other stand for damage. In Treponema denticola (strain ATCC 35405 / DSM 14222 / CIP 103919 / JCM 8153 / KCTC 15104), this protein is UvrABC system protein B.